The sequence spans 545 residues: T-complex protein 1 subunit gamma (545 aa).

Residue M1 is modified to N-acetylmethionine. A disordered region spans residues 1–24 (MMGHRPVLVLSQNTKRESGRKVQS). S11 carries the post-translational modification Phosphoserine. K15 participates in a covalent cross-link: Glycyl lysine isopeptide (Lys-Gly) (interchain with G-Cter in SUMO2). Residue G42 coordinates ADP. G42 is a binding site for ATP. D93 is a binding site for Mg(2+). ADP contacts are provided by G94, T95, T96, S97, T162, and K163. ATP contacts are provided by G94, T95, and T96. Position 170 is a phosphoserine (S170). At K222 the chain carries N6-acetyllysine. Residues S243 and S244 each carry the phosphoserine modification. Y247 is modified (phosphotyrosine). Glycyl lysine isopeptide (Lys-Gly) (interchain with G-Cter in SUMO2) cross-links involve residues K248 and K249. S252 bears the Phosphoserine mark. Cysteines 366 and 372 form a disulfide. K381 is covalently cross-linked (Glycyl lysine isopeptide (Lys-Gly) (interchain with G-Cter in SUMO2)). G411 lines the ADP pocket. Position 411 (G411) interacts with ATP. 2 positions are modified to phosphothreonine: T430 and T459. The ADP site is built by G482, E483, E497, and K502. Residue G482 coordinates ATP. E497 is an ATP binding site. The segment at 526 to 545 (HKKKGDDQNRQTGAPDAGQE) is disordered.

This sequence belongs to the TCP-1 chaperonin family. As to quaternary structure, component of the chaperonin-containing T-complex (TRiC), a hexadecamer composed of two identical back-to-back stacked rings enclosing a protein folding chamber. Each ring is made up of eight different subunits: TCP1/CCT1, CCT2, CCT3, CCT4, CCT5, CCT6A/CCT6, CCT7, CCT8. Interacts with PACRG. Interacts with DNAAF4. Interacts with DLEC1. In terms of processing, the N-terminus is blocked.

The protein localises to the cytoplasm. It carries out the reaction ATP + H2O = ADP + phosphate + H(+). Component of the chaperonin-containing T-complex (TRiC), a molecular chaperone complex that assists the folding of actin, tubulin and other proteins upon ATP hydrolysis. The TRiC complex mediates the folding of WRAP53/TCAB1, thereby regulating telomere maintenance. As part of the TRiC complex may play a role in the assembly of BBSome, a complex involved in ciliogenesis regulating transports vesicles to the cilia. In Mus musculus (Mouse), this protein is T-complex protein 1 subunit gamma (Cct3).